Reading from the N-terminus, the 147-residue chain is Cyanate hydratase (147 aa).

Catalysis depends on residues arginine 88, glutamate 91, and serine 114.

The protein belongs to the cyanase family.

It catalyses the reaction cyanate + hydrogencarbonate + 3 H(+) = NH4(+) + 2 CO2. Its function is as follows. Catalyzes the reaction of cyanate with bicarbonate to produce ammonia and carbon dioxide. This Thiobacillus denitrificans (strain ATCC 25259 / T1) protein is Cyanate hydratase.